Here is a 645-residue protein sequence, read N- to C-terminus: DNA mismatch repair protein MutL (645 aa).

Disordered stretches follow at residues 353–381 and 395–420; these read RPENQLGGSVPAAAEPRPTGPDAGEFGPQ and QGEPFARPAGGGSGSGYQYSPRPTTG.

This sequence belongs to the DNA mismatch repair MutL/HexB family.

Its function is as follows. This protein is involved in the repair of mismatches in DNA. It is required for dam-dependent methyl-directed DNA mismatch repair. May act as a 'molecular matchmaker', a protein that promotes the formation of a stable complex between two or more DNA-binding proteins in an ATP-dependent manner without itself being part of a final effector complex. This is DNA mismatch repair protein MutL from Pseudomonas syringae pv. tomato (strain ATCC BAA-871 / DC3000).